Reading from the N-terminus, the 292-residue chain is 33 kDa chaperonin (292 aa).

Disulfide bonds link Cys-230-Cys-232 and Cys-263-Cys-266.

This sequence belongs to the HSP33 family. In terms of processing, under oxidizing conditions two disulfide bonds are formed involving the reactive cysteines. Under reducing conditions zinc is bound to the reactive cysteines and the protein is inactive.

The protein resides in the cytoplasm. Its function is as follows. Redox regulated molecular chaperone. Protects both thermally unfolding and oxidatively damaged proteins from irreversible aggregation. Plays an important role in the bacterial defense system toward oxidative stress. The protein is 33 kDa chaperonin of Shigella dysenteriae serotype 1 (strain Sd197).